Consider the following 695-residue polypeptide: UvrABC system protein B (695 aa).

The Helicase ATP-binding domain maps to 25–176 (KSILEGHRFQ…NQREVLRDLA (152 aa)). ATP is bound at residue 38–45 (GATGTGKT). The short motif at 91–114 (YYDYYQPEAYVPSTDTYIAKSSSI) is the Beta-hairpin element. The Helicase C-terminal domain occupies 454-617 (LLGEIYLRLE…ITPKPIIKKN (164 aa)). Positions 652-687 (PELIGQLELKMKAAAKNLEFEEAAQLRDQIKKLRQR) constitute a UVR domain.

Belongs to the UvrB family. In terms of assembly, forms a heterotetramer with UvrA during the search for lesions. Interacts with UvrC in an incision complex.

It localises to the cytoplasm. In terms of biological role, the UvrABC repair system catalyzes the recognition and processing of DNA lesions. A damage recognition complex composed of 2 UvrA and 2 UvrB subunits scans DNA for abnormalities. Upon binding of the UvrA(2)B(2) complex to a putative damaged site, the DNA wraps around one UvrB monomer. DNA wrap is dependent on ATP binding by UvrB and probably causes local melting of the DNA helix, facilitating insertion of UvrB beta-hairpin between the DNA strands. Then UvrB probes one DNA strand for the presence of a lesion. If a lesion is found the UvrA subunits dissociate and the UvrB-DNA preincision complex is formed. This complex is subsequently bound by UvrC and the second UvrB is released. If no lesion is found, the DNA wraps around the other UvrB subunit that will check the other stand for damage. The protein is UvrABC system protein B of Synechococcus sp. (strain JA-3-3Ab) (Cyanobacteria bacterium Yellowstone A-Prime).